A 62-amino-acid chain; its full sequence is UPF0434 protein Arad_4458 (62 aa).

The protein belongs to the UPF0434 family.

This is UPF0434 protein Arad_4458 from Rhizobium rhizogenes (strain K84 / ATCC BAA-868) (Agrobacterium radiobacter).